Here is a 263-residue protein sequence, read N- to C-terminus: Methylesterase 1 (263 aa).

Serine 85 functions as the Acyl-ester intermediate in the catalytic mechanism. Residues aspartate 213 and histidine 241 each act as charge relay system in the active site.

Belongs to the AB hydrolase superfamily. Methylesterase family.

It catalyses the reaction methyl (indol-3-yl)acetate + H2O = (indol-3-yl)acetate + methanol + H(+). It carries out the reaction methyl (-)-jasmonate + H2O = jasmonate + methanol + H(+). The enzyme catalyses methyl salicylate + H2O = salicylate + methanol + H(+). The protein operates within plant hormone biosynthesis. It functions in the pathway lipid metabolism; oxylipin biosynthesis. Its activity is regulated as follows. Esterase activity is down-regulated by salicylic acid (SA). Its function is as follows. Methylesterase shown to have carboxylesterase activity, methyl indole-3-acetic acid (MeIAA) esterase activity, methyl salicylate (MeSA) esterase activity and methyl jasmonate (MeJA) esterase activity in vitro. Required to convert methyl salicylate (MeSA) to salicylic acid (SA) as part of the signal transduction pathways that activate systemic acquired resistance in systemic tissue. MeSA is believed to be an inactive form that needs to be demethylated to exert a biological effect. The protein is Methylesterase 1 of Arabidopsis thaliana (Mouse-ear cress).